The following is a 501-amino-acid chain: Aspartate--tRNA ligase, cytoplasmic (501 aa).

The residue at position 52 (Thr52) is a Phosphothreonine. Lys74 carries the N6-acetyllysine modification. Residue Glu229 participates in L-aspartate binding. Ser249 carries the phosphoserine modification. Positions 251 to 254 are aspartate; the sequence is QLYK. Arg273 is a binding site for L-aspartate. ATP is bound by residues 273-275 and 281-283; these read RAE and RHL. Lys374 carries the post-translational modification N6-acetyllysine. Residues 411–415 are binding site for the 3'-end of tRNA; that stretch reads KQSNS. ATP is bound at residue Glu424. Residues Ser427 and Arg431 each contribute to the L-aspartate site. Position 472–475 (472–475) interacts with ATP; sequence GLER. At Thr500 the chain carries Phosphothreonine; by PKA.

Belongs to the class-II aminoacyl-tRNA synthetase family. Type 2 subfamily. In terms of assembly, homodimer. Part of a multisubunit complex that groups tRNA ligases for Arg (RARS1), Asp (DARS1), Gln (QARS1), Ile (IARS1), Leu (LARS1), Lys (KARS1), Met (MARS1) the bifunctional ligase for Glu and Pro (EPRS1) and the auxiliary subunits AIMP1/p43, AIMP2/p38 and EEF1E1/p18.

Its subcellular location is the cytoplasm. The catalysed reaction is tRNA(Asp) + L-aspartate + ATP = L-aspartyl-tRNA(Asp) + AMP + diphosphate. In terms of biological role, catalyzes the specific attachment of an amino acid to its cognate tRNA in a 2 step reaction: the amino acid (AA) is first activated by ATP to form AA-AMP and then transferred to the acceptor end of the tRNA. This Pongo abelii (Sumatran orangutan) protein is Aspartate--tRNA ligase, cytoplasmic (DARS1).